A 135-amino-acid polypeptide reads, in one-letter code: Auxin-responsive protein SAUR66 (135 aa).

It belongs to the ARG7 family.

The protein localises to the cell membrane. May promote auxin-stimulated organ elongation, such as hypocotyls, stamen filaments and petals. The protein is Auxin-responsive protein SAUR66 of Arabidopsis thaliana (Mouse-ear cress).